A 169-amino-acid chain; its full sequence is Small ribosomal subunit protein uS5c (169 aa).

Residues 17 to 80 (WQERVVQIRR…ADGKKHVVEV (64 aa)) enclose the S5 DRBM domain.

Belongs to the universal ribosomal protein uS5 family. As to quaternary structure, part of the 30S ribosomal subunit. Contacts protein S4.

The protein resides in the plastid. The protein localises to the cyanelle. In terms of biological role, with S4 and S12 plays an important role in translational accuracy. This chain is Small ribosomal subunit protein uS5c (rps5), found in Cyanophora paradoxa.